An 87-amino-acid chain; its full sequence is Small ribosomal subunit protein bS20 (87 aa).

The disordered stretch occupies residues methionine 1 to serine 26.

Belongs to the bacterial ribosomal protein bS20 family.

Its function is as follows. Binds directly to 16S ribosomal RNA. This chain is Small ribosomal subunit protein bS20, found in Salmonella typhi.